Reading from the N-terminus, the 370-residue chain is 3-dehydroquinate synthase (370 aa).

NAD(+)-binding positions include 112–116 (GVVGD), 136–137 (TS), lysine 149, lysine 158, and 176–179 (TLRT). Glutamate 191, histidine 254, and histidine 276 together coordinate Zn(2+).

This sequence belongs to the sugar phosphate cyclases superfamily. Dehydroquinate synthase family. Requires NAD(+) as cofactor. It depends on Co(2+) as a cofactor. Zn(2+) is required as a cofactor.

It is found in the cytoplasm. The enzyme catalyses 7-phospho-2-dehydro-3-deoxy-D-arabino-heptonate = 3-dehydroquinate + phosphate. Its pathway is metabolic intermediate biosynthesis; chorismate biosynthesis; chorismate from D-erythrose 4-phosphate and phosphoenolpyruvate: step 2/7. Its function is as follows. Catalyzes the conversion of 3-deoxy-D-arabino-heptulosonate 7-phosphate (DAHP) to dehydroquinate (DHQ). The chain is 3-dehydroquinate synthase from Xanthomonas axonopodis pv. citri (strain 306).